The primary structure comprises 101 residues: Protein translation factor SUI1 homolog (101 aa).

Belongs to the SUI1 family.

In Aeropyrum pernix (strain ATCC 700893 / DSM 11879 / JCM 9820 / NBRC 100138 / K1), this protein is Protein translation factor SUI1 homolog.